A 247-amino-acid polypeptide reads, in one-letter code: Type III pantothenate kinase (247 aa).

ATP is bound at residue 7–14 (AIGNSRWH). Residues Tyr-91 and 95-98 (GLDR) each bind substrate. The Proton acceptor role is filled by Asp-97. Asp-117 is a K(+) binding site. Position 120 (Thr-120) interacts with ATP.

This sequence belongs to the type III pantothenate kinase family. As to quaternary structure, homodimer. The cofactor is NH4(+). K(+) is required as a cofactor.

It localises to the cytoplasm. The enzyme catalyses (R)-pantothenate + ATP = (R)-4'-phosphopantothenate + ADP + H(+). It functions in the pathway cofactor biosynthesis; coenzyme A biosynthesis; CoA from (R)-pantothenate: step 1/5. Functionally, catalyzes the phosphorylation of pantothenate (Pan), the first step in CoA biosynthesis. The chain is Type III pantothenate kinase from Synechococcus sp. (strain ATCC 27144 / PCC 6301 / SAUG 1402/1) (Anacystis nidulans).